The following is a 573-amino-acid chain: Maestro heat-like repeat-containing protein family member 9 (573 aa).

5 HEAT repeats span residues 118–155 (LYKLQILKEMLVWMSKDSSYLQERIMVIINKVLRFTVT), 252–289 (PLLTDFVQSLLMKLSSPDDKIASDAASILIFTLEFHAE), 292–328 (TMVSKIVDAIYRQLCDNNCMKDVMLQVITLLTCTSPK), 357–394 (SVAPHVLKTILLILKGKPGEMEDTVTEGKRFSLDITNL), and 418–458 (QYFP…LLNC).

The polypeptide is Maestro heat-like repeat-containing protein family member 9 (MROH9) (Homo sapiens (Human)).